We begin with the raw amino-acid sequence, 251 residues long: 5'-nucleotidase SurE (251 aa).

A divalent metal cation is bound by residues aspartate 8, aspartate 9, serine 40, and asparagine 95.

This sequence belongs to the SurE nucleotidase family. Requires a divalent metal cation as cofactor.

It localises to the cytoplasm. It carries out the reaction a ribonucleoside 5'-phosphate + H2O = a ribonucleoside + phosphate. Functionally, nucleotidase that shows phosphatase activity on nucleoside 5'-monophosphates. The sequence is that of 5'-nucleotidase SurE from Lawsonia intracellularis (strain PHE/MN1-00).